We begin with the raw amino-acid sequence, 185 residues long: Thiol:disulfide interchange protein DsbE (185 aa).

Topologically, residues 1-4 (MKRN) are cytoplasmic. A helical transmembrane segment spans residues 5–25 (VLLLPLLIFLLIAAALLWQLA). Residues 26–185 (RNAQGDDPTN…WDRYSREAAQ (160 aa)) lie on the Periplasmic side of the membrane. A Thioredoxin domain is found at 39-177 (ALTGKPVPAF…WESELKPLWD (139 aa)). C80 and C83 are joined by a disulfide.

The protein belongs to the thioredoxin family. DsbE subfamily.

Its subcellular location is the cell inner membrane. Functionally, involved in disulfide bond formation. Catalyzes a late, reductive step in the assembly of periplasmic c-type cytochromes, probably the reduction of disulfide bonds of the apocytochrome c to allow covalent linkage with the heme. Possible subunit of a heme lyase. In Salmonella typhimurium (strain LT2 / SGSC1412 / ATCC 700720), this protein is Thiol:disulfide interchange protein DsbE (dsbE1).